A 73-amino-acid polypeptide reads, in one-letter code: Serine rich endogenous peptide 1 (73 aa).

The N-terminal stretch at 1–28 (MGMSGSSGLVHVLMLLLLLSILFHHTES) is a signal peptide. Positions 48-73 (YKPNTAVETPPSRSRRGGGGQNTGAD) are disordered. Positions 53–67 (AVETPPSRSRRGGGG) match the SCOOP motif motif. Positions 59–61 (SRS) match the SxS motif essential for MIK2 binding motif. Residues 64–73 (GGGGQNTGAD) are compositionally biased toward gly residues.

It belongs to the serine rich endogenous peptide (SCOOP) phytocytokine family. As to quaternary structure, interacts with MIK2 (via extracellular leucine-rich repeat domain); this interaction triggers the formation of complex between MIK2 and the BAK1/SERK3 and SERK4 coreceptors, and subsequent BAK1 activation by phosphorylation. As to expression, mostly expressed in leaves and flowers, and, to a lower extent, in seedlings shoots.

It localises to the cell membrane. The protein localises to the secreted. Its subcellular location is the extracellular space. It is found in the apoplast. Brassicaceae-specific phytocytokine (plant endogenous peptide released into the apoplast) perceived by MIK2 in a BAK1/SERK3 and SERK4 coreceptors-dependent manner, that modulates various physiological and antimicrobial processes including growth prevention and reactive oxygen species (ROS) response regulation. This chain is Serine rich endogenous peptide 1, found in Arabidopsis thaliana (Mouse-ear cress).